The sequence spans 367 residues: Alpha-2-HS-glycoprotein (367 aa).

An N-terminal signal peptide occupies residues 1-18 (MKSLVLLLCLAQLWGCHS). In terms of domain architecture, Cystatin fetuin-A-type 1 spans 27-133 (YRQPNCDDPE…KFSVVYAKCD (107 aa)). 6 disulfides stabilise this stretch: Cys-32–Cys-358, Cys-89–Cys-100, Cys-114–Cys-132, Cys-146–Cys-149, Cys-208–Cys-219, and Cys-230–Cys-247. Ser-134, Ser-135, and Ser-138 each carry phosphoserine. In terms of domain architecture, Cystatin fetuin-A-type 2 spans 144–255 (KVCQDCPLLA…TCTVFQTQPV (112 aa)). 2 N-linked (GlcNAc...) asparagine glycosylation sites follow: Asn-156 and Asn-176. A disordered region spans residues 254-301 (PVTSQPQPEGANETVPTPVVDPDAPPSPPLGAPGLPPAGSPPDSHVLL). An N-linked (GlcNAc...) asparagine glycan is attached at Asn-265. Residues 276-293 (DAPPSPPLGAPGLPPAGS) show a composition bias toward pro residues. The propeptide at 301–340 (LAAPPGHQLHWAHYDLRHTFMGVVSLGSPSGEASHPRKTR) is connecting peptide. Residue Thr-319 is modified to Phosphothreonine. Phosphoserine is present on residues Ser-325, Ser-328, and Ser-330. An O-linked (GalNAc...) threonine glycan is attached at Thr-339.

The protein belongs to the fetuin family. In terms of assembly, alpha-2-HS glycoprotein derives from this precursor, when the connecting peptide is cleaved off. The two chains A and B are held together by a single disulfide bond. Phosphorylated by FAM20C in the extracellular medium.

It is found in the secreted. Promotes endocytosis, possesses opsonic properties and influences the mineral phase of bone. Shows affinity for calcium and barium ions. This chain is Alpha-2-HS-glycoprotein (AHSG), found in Pan troglodytes (Chimpanzee).